The following is a 344-amino-acid chain: MQTLTIIRPDDMHLHLRDGDALKAVAPYTARQMGRAVIMPNLKPPVVSVADALAYKARIMAALPEGSAFEPLMTLYLTDNATPELVREAKAAGIVAFKLYPAGATTNSDSGVTDLFKLIPVLEEMAKQGILFLVHGEVTDPEIDIFDREAAFIGRVMKPVLAQVPNLKVVFEHITTAEAARLVLEAGDNVAATVTPQHLLLNRNDLLVGGVRPHHFCLPVLKRETHRQALVAAVTGEKAHKFFLGTDSAPHAKSAKENACGCAGMFSAMTAIELYAEVFEKAGALDKLEAFASKNGARFYGIPENTDTITLVKQSQTVPASVPYGDGELVPMRAGGEIGWTVQY.

2 residues coordinate Zn(2+): histidine 13 and histidine 15. Residues 15–17 (HLR) and asparagine 41 each bind substrate. 3 residues coordinate Zn(2+): lysine 98, histidine 135, and histidine 173. N6-carboxylysine is present on lysine 98. Residue histidine 135 coordinates substrate. Leucine 218 provides a ligand contact to substrate. Aspartate 247 is a Zn(2+) binding site. Aspartate 247 is an active-site residue. Positions 251 and 263 each coordinate substrate.

It belongs to the metallo-dependent hydrolases superfamily. DHOase family. Class II DHOase subfamily. Homodimer. The cofactor is Zn(2+).

The enzyme catalyses (S)-dihydroorotate + H2O = N-carbamoyl-L-aspartate + H(+). Its pathway is pyrimidine metabolism; UMP biosynthesis via de novo pathway; (S)-dihydroorotate from bicarbonate: step 3/3. Functionally, catalyzes the reversible cyclization of carbamoyl aspartate to dihydroorotate. This chain is Dihydroorotase, found in Neisseria meningitidis serogroup B (strain ATCC BAA-335 / MC58).